We begin with the raw amino-acid sequence, 249 residues long: uncharacterized protein (249 aa).

Position 7-14 (7-14 (GKGGCGKS)) interacts with ATP.

This is an uncharacterized protein from Methanocaldococcus jannaschii (strain ATCC 43067 / DSM 2661 / JAL-1 / JCM 10045 / NBRC 100440) (Methanococcus jannaschii).